Reading from the N-terminus, the 289-residue chain is Heme oxygenase 1 (289 aa).

The Cytoplasmic portion of the chain corresponds to 1–266; sequence MERPQLDSMS…SQISTSSSQT (266 aa). Residues Lys18, His25, Tyr134, and Arg183 each contribute to the heme b site. The tract at residues 225-261 is disordered; it reads HKDQSPSQTEFLRQRPASLVQDTTSAETPRGKSQIST. Residues Ser229 and Ser242 each carry the phosphoserine modification. Residues 244–261 show a composition bias toward polar residues; sequence VQDTTSAETPRGKSQIST. A helical; Anchor for type IV membrane protein membrane pass occupies residues 267–289; it reads PLLRWVLTLSFLLATVAVGIYAM.

This sequence belongs to the heme oxygenase family. In terms of assembly, homodimer and higher order homooligomer. Oligomerization is crucial for its stability and function in the endoplasmic reticulum. Interacts with FLVCR2; this interaction is potentiated in the presence of heme. Post-translationally, a soluble form arises by proteolytic removal of the membrane anchor.

The protein localises to the endoplasmic reticulum membrane. It catalyses the reaction heme b + 3 reduced [NADPH--hemoprotein reductase] + 3 O2 = biliverdin IXalpha + CO + Fe(2+) + 3 oxidized [NADPH--hemoprotein reductase] + 3 H2O + H(+). Inhibited by metalloporphyrins such as Sn- and Zn-protoporphyrins. Functionally, catalyzes the oxidative cleavage of heme at the alpha-methene bridge carbon, released as carbon monoxide (CO), to generate biliverdin IXalpha, while releasing the central heme iron chelate as ferrous iron. Affords protection against programmed cell death and this cytoprotective effect relies on its ability to catabolize free heme and prevent it from sensitizing cells to undergo apoptosis. In terms of biological role, catalyzes the oxidative cleavage of heme at the alpha-methene bridge carbon, released as carbon monoxide (CO), to generate biliverdin IXalpha, while releasing the central heme iron chelate as ferrous iron. This is Heme oxygenase 1 (Hmox1) from Rattus norvegicus (Rat).